The primary structure comprises 245 residues: Phycocyanobilin:ferredoxin oxidoreductase (245 aa).

The protein belongs to the HY2 family.

It carries out the reaction (2R,3Z)-phycocyanobilin + 4 oxidized [2Fe-2S]-[ferredoxin] = biliverdin IXalpha + 4 reduced [2Fe-2S]-[ferredoxin] + 4 H(+). In terms of biological role, catalyzes the four-electron reduction of biliverdin IX-alpha (2-electron reduction at both the A and D rings); the reaction proceeds via an isolatable 2-electron intermediate, 181,182-dihydrobiliverdin. Upon overexpression in E.coli with PCB:ferredoxin oxidoreductase, CpeS and either CpcB or PecB permits synthesis of phycocyanin-coupled CpcB or PecB. The chain is Phycocyanobilin:ferredoxin oxidoreductase (pcyA) from Nostoc sp. (strain PCC 7120 / SAG 25.82 / UTEX 2576).